A 356-amino-acid chain; its full sequence is Putative KilA-N domain-containing protein R878 (356 aa).

The span at 1–12 shows a compositional bias: basic residues; the sequence is MKVRKSNNKPLK. The disordered stretch occupies residues 1 to 114; sequence MKVRKSNNKP…DDDGSDNNVY (114 aa). Over residues 14 to 46 the composition is skewed to low complexity; the sequence is SASFTSGTKTGSKSAKSVNSGSKSMKSTKSSSK. A compositionally biased stretch (acidic residues) spans 66–114; it reads SDNDELSDNEISDNESSDDDEISDNESSDDDEISDNEISDDDGSDNNVY. A KilA-N domain is found at 130–239; the sequence is NYSKGKFGNF…VRIGFCMEEW (110 aa).

The polypeptide is Putative KilA-N domain-containing protein R878 (Acanthamoeba polyphaga (Amoeba)).